We begin with the raw amino-acid sequence, 88 residues long: Small ribosomal subunit protein bS16c (88 aa).

Belongs to the bacterial ribosomal protein bS16 family.

It is found in the plastid. The protein resides in the chloroplast. The protein is Small ribosomal subunit protein bS16c of Atropa belladonna (Belladonna).